Here is an 88-residue protein sequence, read N- to C-terminus: DNA-directed RNA polymerase subunit omega (88 aa).

It belongs to the RNA polymerase subunit omega family. In terms of assembly, the RNAP catalytic core consists of 2 alpha, 1 beta, 1 beta' and 1 omega subunit. When a sigma factor is associated with the core the holoenzyme is formed, which can initiate transcription.

It carries out the reaction RNA(n) + a ribonucleoside 5'-triphosphate = RNA(n+1) + diphosphate. Functionally, promotes RNA polymerase assembly. Latches the N- and C-terminal regions of the beta' subunit thereby facilitating its interaction with the beta and alpha subunits. The chain is DNA-directed RNA polymerase subunit omega from Salinispora tropica (strain ATCC BAA-916 / DSM 44818 / JCM 13857 / NBRC 105044 / CNB-440).